The primary structure comprises 129 residues: Prefoldin subunit 6 (129 aa).

Ala2 carries the N-acetylalanine modification. Lys21 bears the N6-acetyllysine mark. Lys66 is subject to N6-acetyllysine; alternate. Lys66 is covalently cross-linked (Glycyl lysine isopeptide (Lys-Gly) (interchain with G-Cter in SUMO1); alternate). Lys66 participates in a covalent cross-link: Glycyl lysine isopeptide (Lys-Gly) (interchain with G-Cter in SUMO2); alternate.

Belongs to the prefoldin subunit beta family. Heterohexamer of two PFD-alpha type and four PFD-beta type subunits. Component of the PAQosome complex which is responsible for the biogenesis of several protein complexes and which consists of R2TP complex members RUVBL1, RUVBL2, RPAP3 and PIH1D1, URI complex members PFDN2, PFDN6, PDRG1, UXT and URI1 as well as ASDURF, POLR2E and DNAAF10/WDR92.

Its function is as follows. Binds specifically to cytosolic chaperonin (c-CPN) and transfers target proteins to it. Binds to nascent polypeptide chain and promotes folding in an environment in which there are many competing pathways for nonnative proteins. The chain is Prefoldin subunit 6 (PFDN6) from Homo sapiens (Human).